Consider the following 354-residue polypeptide: MNGTEGPNFYVPFSNKSGVVRSPFEYPQYYLAEPWQYSVLAAYMFLLILLGFPVNFLTLYVTIQHKKLRTPLNYILLNLAFANHFMVFGGFPVTMYSSMHGYFVFGQTGCYIEGFFATMGGEIALWSLVVLAIERYVVVCKPMSNFRFGENHAIMGVMMTWIMALACAAPPLFGWSRYIPEGMQCSCGVDYYTLKPEVNNESFVIYMFLVHFTIPLMIIFFCYGRLVCTVKEAAAQQQESATTQKAEKEVTRMVIIMVVAFLICWVPYASVAFYIFSNQGTDFGPIFMTVPAFFAKSSAIYNPVIYIVLNKQFRNCMITTICCGKNPFGDDETTSAATSKTEASSVSSSQVSPA.

Over 1 to 36 (MNGTEGPNFYVPFSNKSGVVRSPFEYPQYYLAEPWQ) the chain is Extracellular. 2 N-linked (GlcNAc...) asparagine glycosylation sites follow: N2 and N15. The helical transmembrane segment at 37-61 (YSVLAAYMFLLILLGFPVNFLTLYV) threads the bilayer. The Cytoplasmic segment spans residues 62-73 (TIQHKKLRTPLN). A helical transmembrane segment spans residues 74 to 96 (YILLNLAFANHFMVFGGFPVTMY). The Extracellular portion of the chain corresponds to 97 to 110 (SSMHGYFVFGQTGC). The cysteines at positions 110 and 187 are disulfide-linked. A helical transmembrane segment spans residues 111–133 (YIEGFFATMGGEIALWSLVVLAI). Residues 134–136 (ERY) carry the 'Ionic lock' involved in activated form stabilization motif. Topologically, residues 134–152 (ERYVVVCKPMSNFRFGENH) are cytoplasmic. The chain crosses the membrane as a helical span at residues 153–173 (AIMGVMMTWIMALACAAPPLF). At 174-202 (GWSRYIPEGMQCSCGVDYYTLKPEVNNES) the chain is on the extracellular side. The chain crosses the membrane as a helical span at residues 203-224 (FVIYMFLVHFTIPLMIIFFCYG). At 225–252 (RLVCTVKEAAAQQQESATTQKAEKEVTR) the chain is on the cytoplasmic side. The chain crosses the membrane as a helical span at residues 253 to 274 (MVIIMVVAFLICWVPYASVAFY). The Extracellular segment spans residues 275–286 (IFSNQGTDFGPI). A helical transmembrane segment spans residues 287 to 308 (FMTVPAFFAKSSAIYNPVIYIV). Residue K296 is modified to N6-(retinylidene)lysine. The Cytoplasmic segment spans residues 309-354 (LNKQFRNCMITTICCGKNPFGDDETTSAATSKTEASSVSSSQVSPA). S-palmitoyl cysteine attachment occurs at residues C322 and C323. Positions 332-354 (ETTSAATSKTEASSVSSSQVSPA) are disordered. Residues 334–354 (TSAATSKTEASSVSSSQVSPA) are compositionally biased toward low complexity.

It belongs to the G-protein coupled receptor 1 family. Opsin subfamily. Contains one covalently linked retinal chromophore. Upon light absorption, the covalently bound 11-cis-retinal is converted to all-trans-retinal. After hydrolysis of the Schiff base and release of the covalently bound all-trans-retinal, active rhodopsin is regenerated by binding of a fresh molecule of 11-cis-retinal.

It is found in the membrane. The protein resides in the cell projection. The protein localises to the cilium. Its subcellular location is the photoreceptor outer segment. Functionally, photoreceptor required for image-forming vision at low light intensity. Required for photoreceptor cell viability after birth. Light-induced isomerization of 11-cis to all-trans retinal triggers a conformational change that activates signaling via G-proteins. Subsequent receptor phosphorylation mediates displacement of the bound G-protein alpha subunit by arrestin and terminates signaling. This Ambystoma tigrinum (Eastern tiger salamander) protein is Rhodopsin (RHO).